The primary structure comprises 949 residues: Serine/threonine-protein kinase KIPK2 (949 aa).

4 disordered regions span residues 79 to 116, 323 to 344, 407 to 426, and 495 to 525; these read LETS…VGPS, TALS…TEKS, STST…DKNV, and SSEK…SNLS. The span at 81-94 shows a compositional bias: low complexity; that stretch reads TSASAGTSRSTSPS. 2 stretches are compositionally biased toward polar residues: residues 407–420 and 495–512; these read STST…NTSH and SSEK…LGDY. The segment covering 513–525 has biased composition (low complexity); sequence SSSTSMSEESNLS. The Protein kinase domain occupies 559 to 898; sequence FNLLKKLGCG…AAEIKRHPFF (340 aa). ATP-binding positions include 565–573 and Lys-588; that span reads LGCGDIGTV. Asp-684 acts as the Proton acceptor in catalysis.

The protein belongs to the protein kinase superfamily. Ser/Thr protein kinase family. Interacts with KCBP, PERK8, PERK9, PERK10 and PERK13.

It catalyses the reaction L-seryl-[protein] + ATP = O-phospho-L-seryl-[protein] + ADP + H(+). The enzyme catalyses L-threonyl-[protein] + ATP = O-phospho-L-threonyl-[protein] + ADP + H(+). Serine/threonine-protein kinase that could be involved in the negative regulation of root growth. This Arabidopsis thaliana (Mouse-ear cress) protein is Serine/threonine-protein kinase KIPK2.